A 409-amino-acid polypeptide reads, in one-letter code: Glutamate--tRNA ligase 2 (409 aa).

The 'HIGH' region signature appears at 9-19 (PSPTGNLHIGG). The short motif at 198–202 (KLSKR) is the 'KMSKS' region element. Lys-201 is an ATP binding site.

It belongs to the class-I aminoacyl-tRNA synthetase family. Glutamate--tRNA ligase type 1 subfamily. As to quaternary structure, monomer.

The protein resides in the cytoplasm. It carries out the reaction tRNA(Glu) + L-glutamate + ATP = L-glutamyl-tRNA(Glu) + AMP + diphosphate. Catalyzes the attachment of glutamate to tRNA(Glu) in a two-step reaction: glutamate is first activated by ATP to form Glu-AMP and then transferred to the acceptor end of tRNA(Glu). The sequence is that of Glutamate--tRNA ligase 2 from Neorickettsia sennetsu (strain ATCC VR-367 / Miyayama) (Ehrlichia sennetsu).